Consider the following 135-residue polypeptide: Putative large ribosomal subunit protein eL32' (135 aa).

It belongs to the eukaryotic ribosomal protein eL32 family.

This is Putative large ribosomal subunit protein eL32' (Rpl32-ps) from Mus musculus (Mouse).